The following is a 289-amino-acid chain: Ribosomal protein L11 methyltransferase (289 aa).

The S-adenosyl-L-methionine site is built by T135, G156, D179, and N225.

Belongs to the methyltransferase superfamily. PrmA family.

The protein localises to the cytoplasm. It carries out the reaction L-lysyl-[protein] + 3 S-adenosyl-L-methionine = N(6),N(6),N(6)-trimethyl-L-lysyl-[protein] + 3 S-adenosyl-L-homocysteine + 3 H(+). Functionally, methylates ribosomal protein L11. The polypeptide is Ribosomal protein L11 methyltransferase (Chlorobaculum tepidum (strain ATCC 49652 / DSM 12025 / NBRC 103806 / TLS) (Chlorobium tepidum)).